A 101-amino-acid polypeptide reads, in one-letter code: Small ribosomal subunit protein uS14 (101 aa).

The protein belongs to the universal ribosomal protein uS14 family. As to quaternary structure, part of the 30S ribosomal subunit. Contacts proteins S3 and S10.

In terms of biological role, binds 16S rRNA, required for the assembly of 30S particles and may also be responsible for determining the conformation of the 16S rRNA at the A site. The protein is Small ribosomal subunit protein uS14 of Dinoroseobacter shibae (strain DSM 16493 / NCIMB 14021 / DFL 12).